Here is a 171-residue protein sequence, read N- to C-terminus: NADP-reducing hydrogenase subunit HndA (171 aa).

The [2Fe-2S] cluster site is built by Cys-98, Cys-103, Cys-139, and Cys-143.

Belongs to the complex I 24 kDa subunit family. Heterotetramer composed of HndA, HndB, HndC and HndD subunits. HndA and HndB could form a heterodimeric intermediate in the electron transfer between the active site of hydrogenase subunit HndD and the NADP reduction site of the reducing subunit HndC. [2Fe-2S] cluster is required as a cofactor.

The catalysed reaction is H2 + NADP(+) = NADPH + H(+). Inhibited by oxygen. In terms of biological role, catalyzes the reduction of NADP in the presence of molecular H(2) to yield NADPH. The chain is NADP-reducing hydrogenase subunit HndA (hndA) from Solidesulfovibrio fructosivorans (Desulfovibrio fructosivorans).